The chain runs to 312 residues: Protoheme IX farnesyltransferase (312 aa).

The next 8 helical transmembrane spans lie at 31 to 51 (VMSLVVFTALVGLLMAPGSFH), 52 to 72 (PVLAITAIICIAVGGGAAGAL), 119 to 139 (ILVNWIAAGLLAFTIFFYVVI), 152 to 172 (IVIGGAAGALPPVVAWASVTG), 179 to 199 (ILLFLIIFFWTPPHFWALALF), 225 to 245 (ILLYTVALVAVAAAPWPLGYF), 247 to 267 (VIYGVASLALGGWMLVLAVRV), and 288 to 308 (ILYLFALFAILLVEVVAAAVL).

The protein belongs to the UbiA prenyltransferase family. Protoheme IX farnesyltransferase subfamily.

It localises to the cell inner membrane. The catalysed reaction is heme b + (2E,6E)-farnesyl diphosphate + H2O = Fe(II)-heme o + diphosphate. The protein operates within porphyrin-containing compound metabolism; heme O biosynthesis; heme O from protoheme: step 1/1. Its function is as follows. Converts heme B (protoheme IX) to heme O by substitution of the vinyl group on carbon 2 of heme B porphyrin ring with a hydroxyethyl farnesyl side group. This is Protoheme IX farnesyltransferase from Rhodopseudomonas palustris (strain ATCC BAA-98 / CGA009).